The primary structure comprises 323 residues: Beta-ketoacyl-[acyl-carrier-protein] synthase III (323 aa).

Residues Cys-113 and His-250 contribute to the active site. The tract at residues 251-255 (QANRR) is ACP-binding. The active site involves Asn-280.

This sequence belongs to the thiolase-like superfamily. FabH family. In terms of assembly, homodimer.

The protein resides in the cytoplasm. It carries out the reaction malonyl-[ACP] + acetyl-CoA + H(+) = 3-oxobutanoyl-[ACP] + CO2 + CoA. Its pathway is lipid metabolism; fatty acid biosynthesis. Catalyzes the condensation reaction of fatty acid synthesis by the addition to an acyl acceptor of two carbons from malonyl-ACP. Catalyzes the first condensation reaction which initiates fatty acid synthesis and may therefore play a role in governing the total rate of fatty acid production. Possesses both acetoacetyl-ACP synthase and acetyl transacylase activities. Its substrate specificity determines the biosynthesis of branched-chain and/or straight-chain of fatty acids. The polypeptide is Beta-ketoacyl-[acyl-carrier-protein] synthase III (Rhizobium meliloti (strain 1021) (Ensifer meliloti)).